A 318-amino-acid polypeptide reads, in one-letter code: UDP-N-acetylenolpyruvoylglucosamine reductase (318 aa).

The region spanning Ile38–Gly204 is the FAD-binding PCMH-type domain. Arg182 is an active-site residue. Positions Ser212–Gly232 are disordered. Over residues Leu213 to Lys229 the composition is skewed to basic and acidic residues. Residue Ser233 is the Proton donor of the active site. Glu310 is a catalytic residue.

It belongs to the MurB family. The cofactor is FAD.

It is found in the cytoplasm. It carries out the reaction UDP-N-acetyl-alpha-D-muramate + NADP(+) = UDP-N-acetyl-3-O-(1-carboxyvinyl)-alpha-D-glucosamine + NADPH + H(+). It participates in cell wall biogenesis; peptidoglycan biosynthesis. In terms of biological role, cell wall formation. The polypeptide is UDP-N-acetylenolpyruvoylglucosamine reductase (Leptospira borgpetersenii serovar Hardjo-bovis (strain L550)).